The primary structure comprises 227 residues: Probable methylthioribulose-1-phosphate dehydratase (227 aa).

Residue cysteine 87 participates in substrate binding. 2 residues coordinate Zn(2+): histidine 105 and histidine 107. Catalysis depends on glutamate 129, which acts as the Proton donor/acceptor. Histidine 185 is a Zn(2+) binding site.

This sequence belongs to the aldolase class II family. MtnB subfamily. The cofactor is Zn(2+).

It localises to the cytoplasm. The catalysed reaction is 5-(methylsulfanyl)-D-ribulose 1-phosphate = 5-methylsulfanyl-2,3-dioxopentyl phosphate + H2O. It participates in amino-acid biosynthesis; L-methionine biosynthesis via salvage pathway; L-methionine from S-methyl-5-thio-alpha-D-ribose 1-phosphate: step 2/6. Catalyzes the dehydration of methylthioribulose-1-phosphate (MTRu-1-P) into 2,3-diketo-5-methylthiopentyl-1-phosphate (DK-MTP-1-P). This chain is Probable methylthioribulose-1-phosphate dehydratase, found in Drosophila mojavensis (Fruit fly).